A 533-amino-acid chain; its full sequence is Probable dolichyl pyrophosphate Man9GlcNAc2 alpha-1,3-glucosyltransferase (533 aa).

Residues 1 to 20 (MPKKKPAKHSGEDDITIPVS) are disordered. The next 9 helical transmembrane spans lie at 42–64 (FLCI…YSGA), 149–169 (WTVL…FVLV), 184–204 (WHIA…GHFQ), 214–234 (VGAI…LFSL), 264–284 (ILSV…FWWP), 360–380 (GFLY…FQVH), 422–442 (LLIP…SPGN), 463–483 (VFLL…YLTI), and 491–511 (FLFE…FAFY).

It belongs to the ALG6/ALG8 glucosyltransferase family.

Its subcellular location is the endoplasmic reticulum membrane. It carries out the reaction an alpha-D-Man-(1-&gt;2)-alpha-D-Man-(1-&gt;2)-alpha-D-Man-(1-&gt;3)-[alpha-D-Man-(1-&gt;2)-alpha-D-Man-(1-&gt;3)-[alpha-D-Man-(1-&gt;2)-alpha-D-Man-(1-&gt;6)]-alpha-D-Man-(1-&gt;6)]-beta-D-Man-(1-&gt;4)-beta-D-GlcNAc-(1-&gt;4)-alpha-D-GlcNAc-diphospho-di-trans,poly-cis-dolichol + a di-trans,poly-cis-dolichyl beta-D-glucosyl phosphate = an alpha-D-Glc-(1-&gt;3)-alpha-D-Man-(1-&gt;2)-alpha-D-Man-(1-&gt;2)-alpha-D-Man-(1-&gt;3)-[alpha-D-Man-(1-&gt;2)-alpha-D-Man-(1-&gt;3)-[alpha-D-Man-(1-&gt;2)-alpha-D-Man-(1-&gt;6)]-alpha-D-Man-(1-&gt;6)]-beta-D-Man-(1-&gt;4)-beta-D-GlcNAc-(1-&gt;4)-alpha-D-GlcNAc-diphospho-di-trans,poly-cis-dolichol + a di-trans,poly-cis-dolichyl phosphate + H(+). Its pathway is protein modification; protein glycosylation. Functionally, adds the first glucose residue to the lipid-linked oligosaccharide precursor for N-linked glycosylation. Transfers glucose from dolichyl phosphate glucose (Dol-P-Glc) onto the lipid-linked oligosaccharide Man(9)GlcNAc(2)-PP-Dol. This chain is Probable dolichyl pyrophosphate Man9GlcNAc2 alpha-1,3-glucosyltransferase, found in Arabidopsis thaliana (Mouse-ear cress).